A 377-amino-acid chain; its full sequence is Citrate synthase (377 aa).

Active-site residues include histidine 258 and aspartate 313.

It belongs to the citrate synthase family. As to quaternary structure, homodimer. In terms of processing, the N-terminus is blocked by acetylation.

The catalysed reaction is oxaloacetate + acetyl-CoA + H2O = citrate + CoA + H(+). Its pathway is carbohydrate metabolism; tricarboxylic acid cycle; isocitrate from oxaloacetate: step 1/2. Allosterically inhibited by NADH. The sequence is that of Citrate synthase (gltA) from Saccharolobus solfataricus (strain ATCC 35092 / DSM 1617 / JCM 11322 / P2) (Sulfolobus solfataricus).